The sequence spans 84 residues: Small ribosomal subunit protein bS18 (84 aa).

This sequence belongs to the bacterial ribosomal protein bS18 family. Part of the 30S ribosomal subunit. Forms a tight heterodimer with protein bS6.

In terms of biological role, binds as a heterodimer with protein bS6 to the central domain of the 16S rRNA, where it helps stabilize the platform of the 30S subunit. The chain is Small ribosomal subunit protein bS18 from Maricaulis maris (strain MCS10) (Caulobacter maris).